The primary structure comprises 380 residues: Protein Wnt-5a (380 aa).

The N-terminal stretch at 1-40 (MRKNLWTFQFGGEASGLVGSAMVSQHFVVLLMSLYCLTQS) is a signal peptide. Cysteine 104 and cysteine 115 are disulfide-bonded. 2 N-linked (GlcNAc...) asparagine glycosylation sites follow: asparagine 114 and asparagine 120. Cystine bridges form between cysteine 154–cysteine 162, cysteine 164–cysteine 182, cysteine 238–cysteine 252, cysteine 240–cysteine 247, cysteine 309–cysteine 340, cysteine 325–cysteine 335, cysteine 339–cysteine 379, cysteine 355–cysteine 370, cysteine 357–cysteine 367, and cysteine 362–cysteine 363. Serine 244 carries O-palmitoleoyl serine; by PORCN lipidation. Residues asparagine 312 and asparagine 326 are each glycosylated (N-linked (GlcNAc...) asparagine).

The protein belongs to the Wnt family. Palmitoleoylation is required for efficient binding to frizzled receptors. Depalmitoleoylation leads to Wnt signaling pathway inhibition. Found primarily in ectoderm with lower levels of expression in mesoderm. Detected in the head and tail with lower expression in the middle of the embryo. No expression was found in the notochord.

It is found in the secreted. Its subcellular location is the extracellular space. It localises to the extracellular matrix. Functionally, ligand for members of the frizzled family of seven transmembrane receptors. Can activate or inhibit canonical Wnt signaling, depending on receptor context. Plays a role in normal embryonic development. The polypeptide is Protein Wnt-5a (wnt5a) (Xenopus laevis (African clawed frog)).